A 159-amino-acid chain; its full sequence is ATP synthase subunit b 2 (159 aa).

The helical transmembrane segment at 1-21 (MDATFWAFIALVIFVAIVVYM) threads the bilayer.

It belongs to the ATPase B chain family. As to quaternary structure, F-type ATPases have 2 components, F(1) - the catalytic core - and F(0) - the membrane proton channel. F(1) has five subunits: alpha(3), beta(3), gamma(1), delta(1), epsilon(1). F(0) has three main subunits: a(1), b(2) and c(10-14). The alpha and beta chains form an alternating ring which encloses part of the gamma chain. F(1) is attached to F(0) by a central stalk formed by the gamma and epsilon chains, while a peripheral stalk is formed by the delta and b chains.

It localises to the cell inner membrane. F(1)F(0) ATP synthase produces ATP from ADP in the presence of a proton or sodium gradient. F-type ATPases consist of two structural domains, F(1) containing the extramembraneous catalytic core and F(0) containing the membrane proton channel, linked together by a central stalk and a peripheral stalk. During catalysis, ATP synthesis in the catalytic domain of F(1) is coupled via a rotary mechanism of the central stalk subunits to proton translocation. Functionally, component of the F(0) channel, it forms part of the peripheral stalk, linking F(1) to F(0). The sequence is that of ATP synthase subunit b 2 from Brucella suis (strain ATCC 23445 / NCTC 10510).